We begin with the raw amino-acid sequence, 584 residues long: Arginine--tRNA ligase (584 aa).

The 'HIGH' region signature appears at 127 to 137; it reads PNLAKEMHVGH.

This sequence belongs to the class-I aminoacyl-tRNA synthetase family. As to quaternary structure, monomer.

It is found in the cytoplasm. The catalysed reaction is tRNA(Arg) + L-arginine + ATP = L-arginyl-tRNA(Arg) + AMP + diphosphate. The polypeptide is Arginine--tRNA ligase (Alcanivorax borkumensis (strain ATCC 700651 / DSM 11573 / NCIMB 13689 / SK2)).